The following is a 464-amino-acid chain: Leucine-rich repeat-containing protein 34 (464 aa).

The segment at 1–48 (MAAQPPRPVGERSMGSSREAARAPARSPAWASTQASTPGAALAVQRES) is disordered. Low complexity predominate over residues 16–32 (SSREAARAPARSPAWAS). 2 LRR repeats span residues 295–315 (SLRY…VYLA) and 323–345 (TLEV…LSET).

In terms of assembly, interacts with NPM1 and NCL.

The protein localises to the nucleus. The protein resides in the nucleolus. It is found in the cytoplasm. Functionally, highly expressed in stem cells where it may be involved in regulation of pluripotency. In embryonic stem cells (ESCs), important for normal expression of the pluripotency regulators POU5F1/OCT4 and KLF4. Also important for expression of the ectodermal marker gene NES and the endodermal marker gene GATA4. Promotes stem cell proliferation in vitro. In Homo sapiens (Human), this protein is Leucine-rich repeat-containing protein 34 (LRRC34).